A 273-amino-acid polypeptide reads, in one-letter code: Urease accessory protein UreD (273 aa).

Residues 1–29 (MLMRTATPLDQPRAIGSARVSSKRVNGGS) form a disordered region.

It belongs to the UreD family. As to quaternary structure, ureD, UreF and UreG form a complex that acts as a GTP-hydrolysis-dependent molecular chaperone, activating the urease apoprotein by helping to assemble the nickel containing metallocenter of UreC. The UreE protein probably delivers the nickel.

The protein localises to the cytoplasm. Required for maturation of urease via the functional incorporation of the urease nickel metallocenter. This is Urease accessory protein UreD from Roseobacter denitrificans (strain ATCC 33942 / OCh 114) (Erythrobacter sp. (strain OCh 114)).